The following is a 541-amino-acid chain: Chaperonin GroEL (541 aa).

Residues 29 to 32 (TLGP), 86 to 90 (DGTTT), Gly413, 477 to 479 (DAL), and Asp493 contribute to the ATP site.

This sequence belongs to the chaperonin (HSP60) family. In terms of assembly, forms a cylinder of 14 subunits composed of two heptameric rings stacked back-to-back. Interacts with the co-chaperonin GroES.

It localises to the cytoplasm. It carries out the reaction ATP + H2O + a folded polypeptide = ADP + phosphate + an unfolded polypeptide.. In terms of biological role, together with its co-chaperonin GroES, plays an essential role in assisting protein folding. The GroEL-GroES system forms a nano-cage that allows encapsulation of the non-native substrate proteins and provides a physical environment optimized to promote and accelerate protein folding. This Clostridium botulinum (strain 657 / Type Ba4) protein is Chaperonin GroEL.